Reading from the N-terminus, the 394-residue chain is 3-ketosteroid-9-alpha-monooxygenase, oxygenase component (394 aa).

Positions 27-129 constitute a Rieske domain; sequence WHCLGLAKDF…TLDQDGLLFV (103 aa). Residues C68, H70, C87, and H90 each contribute to the [2Fe-2S] cluster site. Residues N175, H181, and H186 each contribute to the Fe cation site. Residue Y245 participates in substrate binding. Position 305 (D305) interacts with Fe cation.

Homotrimer. The two-component system 3-ketosteroid-9-alpha-monooxygenase is composed of an oxygenase component KshA and a reductase component KshB. It depends on [2Fe-2S] cluster as a cofactor. Requires Fe cation as cofactor.

The enzyme catalyses androsta-1,4-diene-3,17-dione + 2 reduced [2Fe-2S]-[ferredoxin] + O2 + 2 H(+) = 9alpha-hydroxyandrosta-1,4-diene-3,17-dione + 2 oxidized [2Fe-2S]-[ferredoxin] + H2O. Its function is as follows. May be involved in the degradation of cholic acid, a steroid acid found predominantly in the bile. In vitro, catalyzes the introduction of a 9alpha-hydroxyl moiety into the ring B of 3-ketosteroid substrates such as 1,4-androstadiene-3,17-dione (ADD), 4-androstene-3,17-dione (AD), 4-androstene-17beta-ol-3-one (testosterone), 4-pregnene-3,20-dione (progesterone), 3-oxo-23,24-bisnorcholesta-4-en-22-oate (4-BNC), 23,24-bisnorcholesta-4-ene-22-oate, 3-oxo-23,24-bisnorcholaesta-1,4-dien-22-oate (1,4-BNC), 23,24-bisnorcholesta-1,4-diene-22-oate and 3-oxo-23,24-bisnorcholesta-1,4-dien-22-oyl-coenzyme A thioester (1,4-BNC-CoA). KshA1 has the highest specificity for steroids possessing an isopropionyl side chain at C17. In Rhodococcus rhodochrous, this protein is 3-ketosteroid-9-alpha-monooxygenase, oxygenase component.